The following is a 269-amino-acid chain: 4-hydroxy-tetrahydrodipicolinate reductase (269 aa).

Residues 11–16 (GASGRM) and glutamate 37 contribute to the NAD(+) site. Position 38 (arginine 38) interacts with NADP(+). Residues 101-103 (GTT) and 125-128 (AGNM) each bind NAD(+). Catalysis depends on histidine 158, which acts as the Proton donor/acceptor. Histidine 159 is a (S)-2,3,4,5-tetrahydrodipicolinate binding site. The Proton donor role is filled by lysine 162. 168 to 169 (GT) is a binding site for (S)-2,3,4,5-tetrahydrodipicolinate.

Belongs to the DapB family.

The protein localises to the cytoplasm. It carries out the reaction (S)-2,3,4,5-tetrahydrodipicolinate + NAD(+) + H2O = (2S,4S)-4-hydroxy-2,3,4,5-tetrahydrodipicolinate + NADH + H(+). The enzyme catalyses (S)-2,3,4,5-tetrahydrodipicolinate + NADP(+) + H2O = (2S,4S)-4-hydroxy-2,3,4,5-tetrahydrodipicolinate + NADPH + H(+). It participates in amino-acid biosynthesis; L-lysine biosynthesis via DAP pathway; (S)-tetrahydrodipicolinate from L-aspartate: step 4/4. Catalyzes the conversion of 4-hydroxy-tetrahydrodipicolinate (HTPA) to tetrahydrodipicolinate. The polypeptide is 4-hydroxy-tetrahydrodipicolinate reductase (Cereibacter sphaeroides (strain ATCC 17029 / ATH 2.4.9) (Rhodobacter sphaeroides)).